Consider the following 90-residue polypeptide: HssA/B-like protein 4 (90 aa).

The protein belongs to the hssA/B family.

The chain is HssA/B-like protein 4 (hssl4) from Dictyostelium discoideum (Social amoeba).